The sequence spans 1037 residues: Probable inorganic carbon transporter subunit DabA 1 (1037 aa).

Residues Cys-460, Asp-462, His-719, and Cys-734 each coordinate Zn(2+).

This sequence belongs to the inorganic carbon transporter (TC 9.A.2) DabA family. In terms of assembly, forms a complex with DabB. Zn(2+) is required as a cofactor.

It is found in the cell inner membrane. Functionally, part of an energy-coupled inorganic carbon pump. This is Probable inorganic carbon transporter subunit DabA 1 from Nitrobacter winogradskyi (strain ATCC 25391 / DSM 10237 / CIP 104748 / NCIMB 11846 / Nb-255).